A 418-amino-acid chain; its full sequence is Gamma-glutamyl phosphate reductase (418 aa).

It belongs to the gamma-glutamyl phosphate reductase family.

The protein resides in the cytoplasm. The catalysed reaction is L-glutamate 5-semialdehyde + phosphate + NADP(+) = L-glutamyl 5-phosphate + NADPH + H(+). The protein operates within amino-acid biosynthesis; L-proline biosynthesis; L-glutamate 5-semialdehyde from L-glutamate: step 2/2. Its function is as follows. Catalyzes the NADPH-dependent reduction of L-glutamate 5-phosphate into L-glutamate 5-semialdehyde and phosphate. The product spontaneously undergoes cyclization to form 1-pyrroline-5-carboxylate. This chain is Gamma-glutamyl phosphate reductase, found in Syntrophotalea carbinolica (strain DSM 2380 / NBRC 103641 / GraBd1) (Pelobacter carbinolicus).